We begin with the raw amino-acid sequence, 850 residues long: Endoribonuclease ysh-1 (850 aa).

6 residues coordinate Zn(2+): His83, His85, Asp87, His88, His173, and Asp194. His442 (proton donor) is an active-site residue. His464 is a binding site for Zn(2+). Disordered regions lie at residues 685–708 and 732–784; these read VKRSATKNPHTHSPLPADKNPHSH and SPIV…EQQL. The span at 744-754 shows a compositional bias: polar residues; it reads PTTKAITSPSE. Basic and acidic residues predominate over residues 755–766; sequence ETAKSSDVKSDA. Residues 767-781 show a composition bias toward acidic residues; the sequence is DADASMDVSEEDEDE.

This sequence belongs to the metallo-beta-lactamase superfamily. RNA-metabolizing metallo-beta-lactamase-like family. CPSF2/YSH1 subfamily.

It is found in the nucleus. In terms of biological role, component of the cleavage factor I (CF I) involved in pre-mRNA 3'-end processing. The chain is Endoribonuclease ysh-1 (ysh-1) from Neurospora crassa (strain ATCC 24698 / 74-OR23-1A / CBS 708.71 / DSM 1257 / FGSC 987).